Reading from the N-terminus, the 189-residue chain is GMP synthase [glutamine-hydrolyzing] subunit A (189 aa).

A Glutamine amidotransferase type-1 domain is found at 5–189 (KILVVNNYGQ…TNFFEVCDRY (185 aa)). The active-site Nucleophile is C79. Residues H166 and E168 contribute to the active site.

In terms of assembly, heterodimer composed of a glutamine amidotransferase subunit (A) and a GMP-binding subunit (B).

The catalysed reaction is XMP + L-glutamine + ATP + H2O = GMP + L-glutamate + AMP + diphosphate + 2 H(+). Its pathway is purine metabolism; GMP biosynthesis; GMP from XMP (L-Gln route): step 1/1. Functionally, catalyzes the synthesis of GMP from XMP. This is GMP synthase [glutamine-hydrolyzing] subunit A from Methanosarcina acetivorans (strain ATCC 35395 / DSM 2834 / JCM 12185 / C2A).